The primary structure comprises 91 residues: Transcription factor znf27 (91 aa).

It is found in the nucleus. Its function is as follows. Transcription factor; part of the gene cluster 27 that mediates the biosynthesis of asparasone A, a sclerotium-specific anthraquinone pigment important for sclerotial survival. Controls the expression of the non-reducing polyketide synthase (NRPKS) pks27. This is Transcription factor znf27 from Aspergillus flavus (strain ATCC 200026 / FGSC A1120 / IAM 13836 / NRRL 3357 / JCM 12722 / SRRC 167).